Consider the following 357-residue polypeptide: Inositol-tetrakisphosphate 1-kinase 3 (357 aa).

K56 and K98 together coordinate 1D-myo-inositol 1,3,4-trisphosphate. 2 residues coordinate ATP: R133 and K183. Positions 190 and 222 each coordinate 1D-myo-inositol 1,3,4-trisphosphate. Residues 211–222 (QEFVNHGGVLFK), S237, and S262 contribute to the ATP site. Residues D302, D317, and N319 each coordinate Mg(2+). N319 is a binding site for 1D-myo-inositol 1,3,4-trisphosphate.

This sequence belongs to the ITPK1 family. Monomer. Requires Mg(2+) as cofactor. As to expression, expressed in roots, leaves, flowers, anthers and embryos.

The enzyme catalyses 1D-myo-inositol 3,4,5,6-tetrakisphosphate + ATP = 1D-myo-inositol 1,3,4,5,6-pentakisphosphate + ADP + H(+). The catalysed reaction is 1D-myo-inositol 1,3,4-trisphosphate + ATP = 1D-myo-inositol 1,3,4,5-tetrakisphosphate + ADP + H(+). It catalyses the reaction 1D-myo-inositol 1,3,4-trisphosphate + ATP = 1D-myo-inositol 1,3,4,6-tetrakisphosphate + ADP + H(+). Functionally, kinase that can phosphorylate various inositol polyphosphate such as Ins(3,4,5,6)P4 or Ins(1,3,4)P3 and participates in phytic acid biosynthesis in developing seeds. Phytic acid is the primary storage form of phosphorus in cereal grains and other plant seeds. This is Inositol-tetrakisphosphate 1-kinase 3 from Oryza sativa subsp. japonica (Rice).